The chain runs to 817 residues: Actin filament-associated protein 1-like 2 (817 aa).

Position 56 is a phosphotyrosine (Tyr56). Residues 63 to 164 are disordered; that stretch reads HKQQNAESQD…KGKSAPHQWP (102 aa). The span at 123–139 shows a compositional bias: acidic residues; that stretch reads YYEEAEPYDTSLNEDGE. PH domains follow at residues 175–271 and 353–447; these read DARI…EVSG and SLET…SESG. Phosphoserine is present on Ser408. Tyr413 carries the phosphotyrosine modification. Ser484 carries the post-translational modification Phosphoserine. Residues 512-528 show a composition bias toward low complexity; the sequence is TTAGEAPEEATPATDAP. Disordered regions lie at residues 512–657 and 754–786; these read TTAG…KLGK and GTTV…VNSA. A coiled-coil region spans residues 652-748; that stretch reads EIKLGKNRTE…VKDSLRKAEA (97 aa). Over residues 754–763 the composition is skewed to polar residues; the sequence is GTTVDTTHLE. Over residues 767 to 782 the composition is skewed to low complexity; the sequence is PRPKAATPTPAPDCTP.

In terms of assembly, interacts with SRC. Interacts with LCK when tyrosine phosphorylated. Post-translationally, tyrosine phosphorylated (by SRC).

The protein resides in the cytoplasm. In terms of biological role, may play a role in a signaling cascade by enhancing the kinase activity of SRC. Contributes to SRC-regulated transcription activation. The polypeptide is Actin filament-associated protein 1-like 2 (AFAP1L2) (Bos taurus (Bovine)).